The sequence spans 275 residues: Large ribosomal subunit protein uL2 (275 aa).

Polar residues predominate over residues 38 to 53; it reads SSKAGRNNNGRITTRH. Disordered stretches follow at residues 38-60 and 224-257; these read SSKA…GHKQ and AMNP…KGFR.

The protein belongs to the universal ribosomal protein uL2 family. In terms of assembly, part of the 50S ribosomal subunit. Forms a bridge to the 30S subunit in the 70S ribosome.

Functionally, one of the primary rRNA binding proteins. Required for association of the 30S and 50S subunits to form the 70S ribosome, for tRNA binding and peptide bond formation. It has been suggested to have peptidyltransferase activity; this is somewhat controversial. Makes several contacts with the 16S rRNA in the 70S ribosome. The protein is Large ribosomal subunit protein uL2 of Burkholderia pseudomallei (strain 1106a).